We begin with the raw amino-acid sequence, 370 residues long: Phospho-N-acetylmuramoyl-pentapeptide-transferase (370 aa).

11 helical membrane-spanning segments follow: residues 15–35 (PLEGKVSAGVLAVVVYAAAFA), 44–64 (LLSLPLLIATLIAAIVTWWGV), 93–113 (MGGLLVVPVGVIVGGLISWSG), 115–135 (AAEQLLAVAFITLAYMVVGGI), 155–175 (LLLQALAAVIFLIWAGMRGWI), 183–203 (FDINLPLNWLIWPLAVFVFLA), 213–233 (GLDGLAAGCGALVFTGMALQL), 240–260 (GDPSLAGFCMAMAGCWIGFLV), 268–288 (VFMGDTGSLAMGGALTAVALL), 296–316 (LIMGGIFLAESLSVIIQVWVF), and 347–367 (QLVVPGFWLATVFLVLIGIFF).

This sequence belongs to the glycosyltransferase 4 family. MraY subfamily. Mg(2+) is required as a cofactor.

It is found in the cell inner membrane. It catalyses the reaction UDP-N-acetyl-alpha-D-muramoyl-L-alanyl-gamma-D-glutamyl-meso-2,6-diaminopimeloyl-D-alanyl-D-alanine + di-trans,octa-cis-undecaprenyl phosphate = di-trans,octa-cis-undecaprenyl diphospho-N-acetyl-alpha-D-muramoyl-L-alanyl-D-glutamyl-meso-2,6-diaminopimeloyl-D-alanyl-D-alanine + UMP. It participates in cell wall biogenesis; peptidoglycan biosynthesis. In terms of biological role, catalyzes the initial step of the lipid cycle reactions in the biosynthesis of the cell wall peptidoglycan: transfers peptidoglycan precursor phospho-MurNAc-pentapeptide from UDP-MurNAc-pentapeptide onto the lipid carrier undecaprenyl phosphate, yielding undecaprenyl-pyrophosphoryl-MurNAc-pentapeptide, known as lipid I. This chain is Phospho-N-acetylmuramoyl-pentapeptide-transferase, found in Synechococcus sp. (strain CC9311).